A 783-amino-acid chain; its full sequence is Pre-mRNA-splicing ATP-dependent RNA helicase prp28 (783 aa).

The segment covering 1 to 52 has biased composition (pro residues); sequence MPGPPATAPPPEPIERPPTPPPPPPEDSAAPPPPPDMSAPPPPPQDELPPAP. The segment at 1–193 is disordered; the sequence is MPGPPATAPP…VDEDEAAAQA (193 aa). 2 stretches are compositionally biased toward basic and acidic residues: residues 75–84 and 94–114; these read ELVRKKREAD and SKKE…EQSR. Over residues 118–135 the composition is skewed to polar residues; the sequence is STNGASDTASVRSESATP. Low complexity predominate over residues 167–182; that stretch reads SSNGNGNSNSNSNSNG. Positions 343-371 match the Q motif motif; sequence RSWAESGLPSRLLDLVHRVGYKDPTPIQR. In terms of domain architecture, Helicase ATP-binding spans 374–583; sequence IPIAMQSRDL…RKYLRRPAIV (210 aa). 387 to 394 is an ATP binding site; sequence AVTGSGKT. A DEAD box motif is present at residues 502–505; the sequence is DEAD. The region spanning 594–757 is the Helicase C-terminal domain; sequence TVEQRVELIA…RVPDELRKHE (164 aa). The interval 752-783 is disordered; it reads ELRKHEAAQQKPTRGFSKKNDESSAFGGKGGW.

The protein belongs to the DEAD box helicase family. DDX23/PRP28 subfamily. Component of the U5 snRNP complex.

Its subcellular location is the cytoplasm. The protein resides in the nucleus. It catalyses the reaction ATP + H2O = ADP + phosphate + H(+). Its function is as follows. ATP-dependent RNA helicase involved in mRNA splicing. May destabilize the U1/5'-splice site duplex to permit an effective competition for the 5'-splice site by the U6 snRNA, resulting in the switch between U1 and U6 at the 5'-splice site. May also act to unwind the U4/U6 base-pairing interaction in the U4/U6/U5 snRNP, facilitating the first covalent step of splicing. This chain is Pre-mRNA-splicing ATP-dependent RNA helicase prp28 (prp28), found in Aspergillus terreus (strain NIH 2624 / FGSC A1156).